Consider the following 409-residue polypeptide: N-acetylglucosamine-6-phosphate deacetylase (409 aa).

E143 provides a ligand contact to a divalent metal cation. 154 to 155 lines the substrate pocket; sequence AH. The a divalent metal cation site is built by H211 and H232. Residues 235–236, R243, and 269–272 contribute to the substrate site; these read NA and DGIH. D294 serves as the catalytic Proton donor/acceptor. 328–330 serves as a coordination point for substrate; sequence LSG.

Belongs to the metallo-dependent hydrolases superfamily. NagA family. It depends on a divalent metal cation as a cofactor.

The catalysed reaction is N-acetyl-D-glucosamine 6-phosphate + H2O = D-glucosamine 6-phosphate + acetate. The protein operates within amino-sugar metabolism; N-acetylneuraminate degradation. Hydrolyzes the N-glycolyl group from N-glycolylglucosamine 6-phosphate (GlcNGc-6-P) in the N-glycolylneuraminic acid (Neu5Gc) degradation pathway. The sequence is that of N-acetylglucosamine-6-phosphate deacetylase (Amdhd2) from Rattus norvegicus (Rat).